The following is a 557-amino-acid chain: MNYLHNFKDTLFVDLLEVLNIVTIGEEHVNQLNLSGDASLSASSESSNMSFNSGSEENSQEKSVEDLEKQNCEINIHKNSDKEADTKKDPFLVTFNGEDDPLMPYNWSTNKKALIIIQTMLLTCVNYMGSSIYTPGQLEIQNEFHVGHVVGTLNLSLYVLGYGLGPIVFSPLTEISSIGRLPVYMITFFLFTMLQIGCALAPNFAGLVILRFITGVLCSPALSTGGATLGDIVSQNYLALVLGLWSIGAVAAPVLAPLLGASMVVAKDWRWIFWLLFFCCCATMLLLTFFFPETSSDTVLHRKAARIRKLTGDNRYYTEKEREEAQLPKKQFLIETLYRPFSMMITEPIVLAFDLYIALCYGAFYLFFEAFPIVFGGIYHFTLVEQGLAYFGFCVGCIFAYIILLVFSIKVAAKRFANNTFTPETTLILAMCIGWCIPLALFMFGWTAKVHWILPIISEVFFVLGCFNIFQASFSYLAICYPKYVASVFAGNGFARSSFAAAFPLFGQAMYNNLGTKNYPVAWGSSLVGFFTIGLWVIPFVLYKYGPSLRSMSKYNR.

3 N-linked (GlcNAc...) asparagine glycosylation sites follow: Asn-33, Asn-48, and Asn-106. Positions 44-57 are enriched in low complexity; sequence SESSNMSFNSGSEE. Residues 44–67 are disordered; that stretch reads SESSNMSFNSGSEENSQEKSVEDL. Helical transmembrane passes span 113 to 133, 149 to 169, 181 to 201, 204 to 224, 238 to 258, 271 to 291, 355 to 375, and 387 to 407; these read ALIIIQTMLLTCVNYMGSSIY, VVGTLNLSLYVLGYGLGPIVF, LPVYMITFFLFTMLQIGCALA, FAGLVILRFITGVLCSPALST, LALVLGLWSIGAVAAPVLAPL, WIFWLLFFCCCATMLLLTFFF, LYIALCYGAFYLFFEAFPIVF, and GLAYFGFCVGCIFAYIILLVF. A glycan (N-linked (GlcNAc...) asparagine) is linked at Asn-418. 4 helical membrane passes run 426–446, 450–470, 484–506, and 521–541; these read TLILAMCIGWCIPLALFMFGW, VHWILPIISEVFFVLGCFNIF, YVASVFAGNGFARSSFAAAFPLF, and VAWGSSLVGFFTIGLWVIPFV.

The protein belongs to the major facilitator superfamily.

Its subcellular location is the cell membrane. In terms of biological role, multidrug transporter that confers resistance to 5-flucytosine (5-FC) and clotrimazole. Also confers resistance to benomyl, but not 4-nitroquinoline-N-oxide, cycloheximide, or fluconazole. Plays direct roles in extrusion of 5-flucytosine and clotrimazole. The chain is Multidrug transporter FLR1 from Candida glabrata (strain ATCC 2001 / BCRC 20586 / JCM 3761 / NBRC 0622 / NRRL Y-65 / CBS 138) (Yeast).